The sequence spans 501 residues: MTDIQNKNYIIALDQGTTSSRAIIFDRDANVVCTAQREFTQHYPQAGWVEHDPMEIFATQSAVMVEALAQAGLHHDQVAAIGITNQRETTVVWDKVTGRPIYNAIVWQCRRSTEICQQLKRDGHEQYINDTTGLVTDPYFSGTKLKWILDNVEGSRERARNGELLFGTIDSWLIWKFTGGKTHVTDYTNASRTMLFNIHTLEWDAKMLEILDVPREMLPEVKSSSEIYGRTKSGIAIGGIAGDQQAALFGQMCVEAGQAKNTYGTGCFLLMNTGDKAVKSNHGMLTTIACGPRGEVAYALEGAVFNGGSTVQWLRDELKIIADATDTEYFAGKVKDSNGVYLVPAFTGLGAPYWDPYARGALFGLTRGVRVDHIIRAALESIAYQTRDVLDAMQQDSGERLKALRVDGGAVANNFLMQFQADILGTQVERPQMRETTALGAAYLAGLACGFWRSLDELRGKAVIEREFEPQLDEGAKEKLYAGWQKAVSRTRDWEPHEGAE.

Threonine 17 contacts ADP. The ATP site is built by threonine 17, threonine 18, and serine 19. A sn-glycerol 3-phosphate-binding site is contributed by threonine 17. Arginine 21 contacts ADP. Arginine 87, glutamate 88, tyrosine 139, and aspartate 243 together coordinate sn-glycerol 3-phosphate. Residues arginine 87, glutamate 88, tyrosine 139, aspartate 243, and glutamine 244 each contribute to the glycerol site. ADP-binding residues include threonine 265 and glycine 308. Residues threonine 265, glycine 308, glutamine 312, and glycine 409 each contribute to the ATP site. The ADP site is built by glycine 409 and asparagine 413.

It belongs to the FGGY kinase family.

It carries out the reaction glycerol + ATP = sn-glycerol 3-phosphate + ADP + H(+). Its pathway is polyol metabolism; glycerol degradation via glycerol kinase pathway; sn-glycerol 3-phosphate from glycerol: step 1/1. With respect to regulation, inhibited by fructose 1,6-bisphosphate (FBP). Functionally, key enzyme in the regulation of glycerol uptake and metabolism. Catalyzes the phosphorylation of glycerol to yield sn-glycerol 3-phosphate. This is Glycerol kinase from Pseudomonas fluorescens (strain SBW25).